The sequence spans 313 residues: Short-chain dehydrogenase/reductase family 9C member 7 (313 aa).

Position 29–53 (Phe29–Leu53) interacts with NADP(+). Ser160 is a binding site for substrate. Tyr172 acts as the Proton acceptor in catalysis. At Ser185 the chain carries Phosphoserine.

It belongs to the short-chain dehydrogenases/reductases (SDR) family. As to expression, highly expressed in liver.

Its subcellular location is the cytoplasm. The catalysed reaction is a N-[omega-(9R,10R)-epoxy-(13R)-hydroxy-(11E)-octadecenoyloxy]acyl-beta-D-glucosyl-(1&lt;-&gt;1)-sphing-4E-enine + NAD(+) = a N-[omega-(9R,10R)-epoxy-13-oxo-(11E)-octadecenoyloxy]acyl-beta-D-glucosyl-(1&lt;-&gt;1)-sphing-4E-enine + NADH + H(+). The enzyme catalyses a N-[omega-(9R,10R)-epoxy-(13R)-hydroxy-(11E)-octadecenoyloxy]-acylsphing-4E-enine + NAD(+) = a N-[omega-(9R,10R)-epoxy-13-oxo-(11E)-octadecenoyloxy]-acylsphing-4E-enine + NADH + H(+). Its function is as follows. Plays a crucial role in the formation of the epidermal permeability barrier. Catalyzes the NAD+-dependent dehydrogenation of the linoleate 9,10-trans-epoxy-11E-13-alcohol esterified in omega-O-acylceramides (such as in N-[omega-(9R,10R)-epoxy-(13R)-hydroxy-(11E)-octadecenoyloxy]-acylsphing-4E-enine) to the corresponding 13-ketone, the reactive moiety required for binding of epidermal ceramides to proteins. Displays weak conversion of all-trans-retinal to all-trans-retinol in the presence of NADH. Has apparently no steroid dehydrogenase activity. The chain is Short-chain dehydrogenase/reductase family 9C member 7 (Sdr9c7) from Mus musculus (Mouse).